We begin with the raw amino-acid sequence, 354 residues long: Adenine deaminase (354 aa).

Zn(2+) is bound by residues His-19, His-21, and His-211. Glu-214 acts as the Proton donor in catalysis. Residue Asp-291 coordinates Zn(2+). Asp-292 contributes to the substrate binding site.

This sequence belongs to the metallo-dependent hydrolases superfamily. Adenosine and AMP deaminases family. Adenine deaminase type 2 subfamily. The cofactor is Zn(2+).

The protein resides in the cytoplasm. Its subcellular location is the nucleus. The catalysed reaction is adenine + H2O + H(+) = hypoxanthine + NH4(+). In terms of biological role, catalyzes the hydrolytic deamination of adenine to hypoxanthine. Plays an important role in the purine salvage pathway and in nitrogen catabolism. This Aspergillus fumigatus (strain ATCC MYA-4609 / CBS 101355 / FGSC A1100 / Af293) (Neosartorya fumigata) protein is Adenine deaminase (aah1).